Here is an 84-residue protein sequence, read N- to C-terminus: Small ribosomal subunit protein bS20 (84 aa).

It belongs to the bacterial ribosomal protein bS20 family.

In terms of biological role, binds directly to 16S ribosomal RNA. This chain is Small ribosomal subunit protein bS20, found in Azobacteroides pseudotrichonymphae genomovar. CFP2.